Reading from the N-terminus, the 240-residue chain is Transcriptional regulatory protein BaeR (240 aa).

The 114-residue stretch at arginine 12–leucine 125 folds into the Response regulatory domain. Aspartate 61 is modified (4-aspartylphosphate). Positions glutamine 131–alanine 234 form a DNA-binding region, ompR/PhoB-type.

In terms of processing, phosphorylated by BaeS.

The protein localises to the cytoplasm. Member of the two-component regulatory system BaeS/BaeR. Activates the mdtABCD operon. The protein is Transcriptional regulatory protein BaeR (baeR) of Escherichia coli O6:H1 (strain CFT073 / ATCC 700928 / UPEC).